An 83-amino-acid chain; its full sequence is Large ribosomal subunit protein eL43 (83 aa).

C38, C41, C56, and C59 together coordinate Zn(2+). The C4-type zinc-finger motif lies at 38 to 59 (CPVCGRRAVKRISTGIWQCTKC).

Belongs to the eukaryotic ribosomal protein eL43 family. Putative zinc-binding subfamily. Part of the 50S ribosomal subunit. Zn(2+) serves as cofactor.

Functionally, binds to the 23S rRNA. The chain is Large ribosomal subunit protein eL43 from Pyrococcus horikoshii (strain ATCC 700860 / DSM 12428 / JCM 9974 / NBRC 100139 / OT-3).